A 477-amino-acid polypeptide reads, in one-letter code: Peroxisome proliferator-activated receptor gamma (477 aa).

S87 bears the Phosphoserine; by MAPK mark. Residues 110-184 constitute a DNA-binding region (nuclear receptor); the sequence is AIECRVCGDK…VGMSHNAIRF (75 aa). NR C4-type zinc fingers lie at residues 113–133 and 150–172; these read CRVC…CEGC and CDLN…FQKC. The disordered stretch occupies residues 231 to 281; that stretch reads TKAKAPGHPDGQSHRQNSRGYTRHELADDGGGSDQGAVREPRAEQGGGDSN. The NR LBD domain occupies 252–475; sequence TRHELADDGG…HPLLQEIYKD (224 aa). A 9aaTAD motif is present at residues 467 to 475; the sequence is PLLQEIYKD.

The protein belongs to the nuclear hormone receptor family. NR1 subfamily. As to quaternary structure, heterodimer with the retinoid X receptor. In terms of tissue distribution, expressed mainly in adipose tissue and kidney.

Its subcellular location is the nucleus. The protein resides in the cytoplasm. Its function is as follows. Receptor that binds peroxisome proliferators such as hypolipidemic drugs and fatty acids. Once activated by a ligand, the receptor binds to a promoter element in the gene for acyl-CoA oxidase and activates its transcription. It therefore controls the peroxisomal beta-oxidation pathway of fatty acids. Key regulator of adipocyte differentiation and glucose homeostasis. May play a role in the regulation of circadian rhythm. The polypeptide is Peroxisome proliferator-activated receptor gamma (pparg) (Xenopus laevis (African clawed frog)).